The chain runs to 196 residues: Peptidyl-tRNA hydrolase (196 aa).

Tyr18 provides a ligand contact to tRNA. The active-site Proton acceptor is His23. 3 residues coordinate tRNA: Phe69, Asn71, and Asn117.

It belongs to the PTH family. As to quaternary structure, monomer.

The protein resides in the cytoplasm. It carries out the reaction an N-acyl-L-alpha-aminoacyl-tRNA + H2O = an N-acyl-L-amino acid + a tRNA + H(+). Hydrolyzes ribosome-free peptidyl-tRNAs (with 1 or more amino acids incorporated), which drop off the ribosome during protein synthesis, or as a result of ribosome stalling. Its function is as follows. Catalyzes the release of premature peptidyl moieties from peptidyl-tRNA molecules trapped in stalled 50S ribosomal subunits, and thus maintains levels of free tRNAs and 50S ribosomes. This is Peptidyl-tRNA hydrolase from Aliivibrio fischeri (strain MJ11) (Vibrio fischeri).